A 271-amino-acid chain; its full sequence is MARELLFLACAIVIADSWPAKAIDIESLFGHTIRIEGEYPERTLKVDDRELHRNALLLFDGLFIVDGVPALIGSSSNGGNACDGTPFVVSFPPGARPRFDGPIEACAYIGHEVSDERILFSTNNIPGQGREQWAWTPADGMKELGVAAFVPDDKSGWQALRERSFEHPSDALKNADIAATIKSLLGADFEAFQAIITGTGSGEFKSDDYIGRTCTPHMCREQEALLFLSAKDRRAYAAWKPHQKKIIVHPPVKQWPEKAKQELRAWAETWK.

A signal peptide spans 1-22; that stretch reads MARELLFLACAIVIADSWPAKA.

This is an uncharacterized protein from Sinorhizobium fredii (strain NBRC 101917 / NGR234).